A 282-amino-acid polypeptide reads, in one-letter code: Bis(5'-nucleosyl)-tetraphosphatase, symmetrical (282 aa).

This sequence belongs to the Ap4A hydrolase family.

The catalysed reaction is P(1),P(4)-bis(5'-adenosyl) tetraphosphate + H2O = 2 ADP + 2 H(+). Hydrolyzes diadenosine 5',5'''-P1,P4-tetraphosphate to yield ADP. This is Bis(5'-nucleosyl)-tetraphosphatase, symmetrical from Sodalis glossinidius (strain morsitans).